Consider the following 333-residue polypeptide: Protoheme IX farnesyltransferase (333 aa).

7 consecutive transmembrane segments (helical) span residues 64 to 84 (LICTLGGGALAAAAAGALNCL), 110 to 130 (TVFLAAVSCTLAASMLLVSGV), 133 to 153 (LAAGLTLLGLFSYVILYTVIL), 161 to 181 (IVFGGVAGAIPPLVGASAATG), 189 to 209 (WLFGLVMLWTPAHFWALAILL), 246 to 266 (IMGVFALPEGGLLYGIMLLPF), and 287 to 307 (AKSLFRWSILYMFGICLLLLI).

This sequence belongs to the UbiA prenyltransferase family. Protoheme IX farnesyltransferase subfamily.

The protein resides in the cell inner membrane. It carries out the reaction heme b + (2E,6E)-farnesyl diphosphate + H2O = Fe(II)-heme o + diphosphate. Its pathway is porphyrin-containing compound metabolism; heme O biosynthesis; heme O from protoheme: step 1/1. Its function is as follows. Converts heme B (protoheme IX) to heme O by substitution of the vinyl group on carbon 2 of heme B porphyrin ring with a hydroxyethyl farnesyl side group. The chain is Protoheme IX farnesyltransferase from Prochlorococcus marinus (strain AS9601).